The primary structure comprises 333 residues: D-threonate 4-phosphate dehydrogenase (333 aa).

Substrate is bound by residues His140 and Thr141. The a divalent metal cation site is built by His170, His214, and His270. Residues Lys278, Asn287, and Arg296 each coordinate substrate.

The protein belongs to the PdxA family. PdxA2 subfamily. Homodimer. A divalent metal cation is required as a cofactor.

It carries out the reaction 4-O-phospho-D-threonate + NAD(+) = dihydroxyacetone phosphate + CO2 + NADH. Functionally, catalyzes the NAD-dependent oxidation and subsequent decarboxylation of D-threonate 4-phosphate to produce dihydroxyacetone phosphate (DHAP). Can also use 4-hydroxy-L-threonine 4-phosphate as substrate. The protein is D-threonate 4-phosphate dehydrogenase of Cupriavidus necator (strain ATCC 17699 / DSM 428 / KCTC 22496 / NCIMB 10442 / H16 / Stanier 337) (Ralstonia eutropha).